Consider the following 435-residue polypeptide: Secreted RxLR effector protein 35 (435 aa).

The N-terminal stretch at 1–22 (MRGAYYIIIALCVVASSQVAAG) is a signal peptide. Positions 48 to 65 (RFLRGSRVVHDDLANEER) match the RxLR-dEER motif. The interval 336–357 (RPKRTTDGNTGTISLPTKPTKT) is disordered. Positions 342–354 (DGNTGTISLPTKP) are enriched in polar residues.

It belongs to the RxLR effector family.

It is found in the secreted. The protein resides in the host nucleus. Its function is as follows. Secreted effector that acts as an elicitor that induces cell death in host plant cells. The sequence is that of Secreted RxLR effector protein 35 from Plasmopara viticola (Downy mildew of grapevine).